The chain runs to 101 residues: Large ribosomal subunit protein uL23 (101 aa).

The protein belongs to the universal ribosomal protein uL23 family. As to quaternary structure, part of the 50S ribosomal subunit. Contacts protein L29, and trigger factor when it is bound to the ribosome.

Functionally, one of the early assembly proteins it binds 23S rRNA. One of the proteins that surrounds the polypeptide exit tunnel on the outside of the ribosome. Forms the main docking site for trigger factor binding to the ribosome. The chain is Large ribosomal subunit protein uL23 from Aromatoleum aromaticum (strain DSM 19018 / LMG 30748 / EbN1) (Azoarcus sp. (strain EbN1)).